An 817-amino-acid polypeptide reads, in one-letter code: Verprolin (817 aa).

Pro residues predominate over residues 1–15 (MAGAPAPPPPPPPPA). A disordered region spans residues 1–752 (MAGAPAPPPP…THTNQPDVDV (752 aa)). The 18-residue stretch at 30-47 (GRDALLGDIRKGMKLKKA) folds into the WH2 1 domain. A compositionally biased stretch (basic and acidic residues) spans 37-51 (DIRKGMKLKKAETND). Positions 62–79 (VSSASGSSGTVSSKGPSM) are enriched in low complexity. In terms of domain architecture, WH2 2 spans 87–106 (MGAPQLGDILAGGIPKLKHI). N-linked (GlcNAc...) asparagine glycosylation occurs at Asn109. Residues 119–180 (SAPPIPGAVP…VPSSPAPPLP (62 aa)) show a composition bias toward pro residues. A glycan (N-linked (GlcNAc...) asparagine) is linked at Asn212. Pro residues predominate over residues 236 to 245 (PQAPPPPPTP). Residues 254-265 (IKPTDNAVSPPS) show a composition bias toward polar residues. Over residues 306 to 335 (SQPPLPSSAPPIPTSHAPPLPPTAPPPPSL) the composition is skewed to pro residues. Residues 336-348 (PNVTSAPKKATSA) show a composition bias toward low complexity. Asn337 carries an N-linked (GlcNAc...) asparagine glycan. Pro residues predominate over residues 372 to 382 (PVPPTLAPPLP). Asn383 carries N-linked (GlcNAc...) asparagine glycosylation. Over residues 383-395 (NTTSVPPNKASSM) the composition is skewed to low complexity. Pro residues predominate over residues 396 to 407 (PAPPPPPPPPPG). The span at 408 to 422 (AFSTSSALSASSIPL) shows a compositional bias: low complexity. Over residues 423–432 (APLPPPPPPS) the composition is skewed to pro residues. A compositionally biased stretch (low complexity) spans 447–469 (LTTNKPSASSKQSKISSSSSSSA). The span at 502 to 516 (DKQEDVIGSSKDDNV) shows a compositional bias: basic and acidic residues. Residues 518-534 (PSPISPSINPPKQSSQN) are compositionally biased toward low complexity. Ser519 carries the post-translational modification Phosphoserine. The span at 557–579 (APPPHTDAMAPPLPPSAPPPPIT) shows a compositional bias: pro residues. The span at 588–597 (GDDHTNDKSE) shows a compositional bias: basic and acidic residues. Positions 649–661 (PPSPPVAAAPPLP) are enriched in pro residues. Residues 713 to 737 (MDTGTSNSPSKNLKQRLFSTGGSTL) are compositionally biased toward polar residues. A Phosphoserine modification is found at Ser762. Residues Asn784 and Asn796 are each glycosylated (N-linked (GlcNAc...) asparagine). The disordered stretch occupies residues 786–806 (SQMPKPRPFQNKTKLYPSGKG).

The protein belongs to the verprolin family. In terms of processing, N-glycosylated.

Its subcellular location is the cytoplasm. It localises to the cytoskeleton. Involved in cytoskeletal organization and cellular growth. May exert its effects on the cytoskeleton directly, or indirectly via proline-binding proteins (e.g. profilin) or proteins possessing SH3 domains. This Saccharomyces cerevisiae (strain ATCC 204508 / S288c) (Baker's yeast) protein is Verprolin (VRP1).